The primary structure comprises 785 residues: Probably inactive leucine-rich repeat receptor-like protein kinase At5g58150 (785 aa).

The N-terminal stretch at 1–21 (MRLSLWGSLLFFSFFVKHLTS) is a signal peptide. Residues 22–436 (LDPNTDAYHL…KVNKKNTGLK (415 aa)) are Extracellular-facing. LRR repeat units follow at residues 64–88 (SENV…TIGK), 89–112 (MSKL…LWSL), 114–136 (LLES…IGNF), 138–160 (SLHT…ISNL), 161–184 (VNLT…LVHC), 186–208 (SLLS…FGSA), 210–232 (PLLK…VLHE), 236–258 (TVDL…HKHN), 259–283 (WSSL…LSSA), 284–306 (HKLG…EIGK), 307–330 (LSAL…EISR), 331–355 (LSHL…SVKN), 357–377 (EVLD…LLEK), and 379–405 (AMMQ…TIQR). Asn-119 carries an N-linked (GlcNAc...) asparagine glycan. N-linked (GlcNAc...) asparagine glycans are attached at residues Asn-162, Asn-198, Asn-216, and Asn-258. N-linked (GlcNAc...) asparagine glycans are attached at residues Asn-314, Asn-319, and Asn-343. Asn-385, Asn-390, and Asn-397 each carry an N-linked (GlcNAc...) asparagine glycan. A helical transmembrane segment spans residues 437-457 (IGLGLAISMAFLLIGLLLILV). Residues 458–785 (ALRVRRKSRT…GLLKDISPNY (328 aa)) lie on the Cytoplasmic side of the membrane. 2 positions are modified to phosphothreonine: Thr-510 and Thr-518. The 265-residue stretch at 521-785 (FDRGTMLWEG…GLLKDISPNY (265 aa)) folds into the Protein kinase domain. ATP is bound by residues 527 to 535 (LWEGKSGPT) and Lys-549. 2 positions are modified to phosphotyrosine: Tyr-594 and Tyr-683.

It belongs to the protein kinase superfamily. Ser/Thr protein kinase family.

The protein localises to the cell membrane. The chain is Probably inactive leucine-rich repeat receptor-like protein kinase At5g58150 from Arabidopsis thaliana (Mouse-ear cress).